The primary structure comprises 192 residues: Orotate phosphoribosyltransferase (192 aa).

5-phospho-alpha-D-ribose 1-diphosphate contacts are provided by residues R84, K88, and 110-118 (DDVLTTGNS). 2 residues coordinate orotate: T114 and R142.

Belongs to the purine/pyrimidine phosphoribosyltransferase family. PyrE subfamily. In terms of assembly, homodimer. The cofactor is Mg(2+).

The catalysed reaction is orotidine 5'-phosphate + diphosphate = orotate + 5-phospho-alpha-D-ribose 1-diphosphate. Its pathway is pyrimidine metabolism; UMP biosynthesis via de novo pathway; UMP from orotate: step 1/2. Its function is as follows. Catalyzes the transfer of a ribosyl phosphate group from 5-phosphoribose 1-diphosphate to orotate, leading to the formation of orotidine monophosphate (OMP). The chain is Orotate phosphoribosyltransferase from Pyrobaculum calidifontis (strain DSM 21063 / JCM 11548 / VA1).